A 424-amino-acid chain; its full sequence is Type II methyltransferase M.BspRI (424 aa).

The 351-residue stretch at 58–408 (FNVLSLFCGA…KSIAQFAADY (351 aa)) folds into the SAM-dependent MTase C5-type domain. Residue Cys-156 is the S-methylcysteine intermediate of the active site. An S-methylcysteine; by autocatalysis modification is found at Cys-181.

The protein belongs to the class I-like SAM-binding methyltransferase superfamily. C5-methyltransferase family. Monomer. In terms of processing, in the absence of DNA, can self-methylate two cysteine residues.

It carries out the reaction a 2'-deoxycytidine in DNA + S-adenosyl-L-methionine = a 5-methyl-2'-deoxycytidine in DNA + S-adenosyl-L-homocysteine + H(+). In terms of biological role, a methylase, recognizes the double-stranded sequence 5'-GGCC-3', methylates C-3 on both strands, and protects the DNA from cleavage by the BspRI endonuclease. This chain is Type II methyltransferase M.BspRI (bspRIM), found in Lysinibacillus sphaericus (Bacillus sphaericus).